Reading from the N-terminus, the 363-residue chain is MSSPATTITFFFFFTLSSFFYITSSLQNNNNNKHTATVNSLNIPSAAAEITLVNPKLPPRSLSLTSSKKFEGSSNLVHLRYHMGPVLSSSPINIYVIWYGQWSRPHKSLIRDFLNSISDAKAPSPSVSEWWRTASLYTDQTGSNVSRSVLIAGEYSDSKYSHGQHLTRLTIQEVIASAARSASFPVDHKNGMYLVLTSHDVTMQDFCRAVCGFHYFTFPSMVGYTMPYAWVGQSGKQCPEVCAYPFALPGYMGHGGPGELRPPNGETGVDGMVSVIGHELAEVVSNPLINAWYAGEDPTAPTEIGDLCEGLYGSGGGGGYIGQVMRDREGKTFNMNGKGGRKFLVQWIWNPNLKACSGPNSVD.

The signal sequence occupies residues 1–25 (MSSPATTITFFFFFTLSSFFYITSS). A glycan (N-linked (GlcNAc...) asparagine) is linked at N144.

It belongs to the EXORDIUM family.

The protein localises to the secreted. The protein resides in the extracellular space. Its subcellular location is the apoplast. In terms of biological role, may play a role in a brassinosteroid-dependent regulation of growth and development. The chain is Protein EXORDIUM-like 5 (EXL5) from Arabidopsis thaliana (Mouse-ear cress).